Reading from the N-terminus, the 243-residue chain is tRNA pseudouridine synthase A (243 aa).

Asp53 serves as the catalytic Nucleophile. Residue Tyr111 coordinates substrate.

The protein belongs to the tRNA pseudouridine synthase TruA family. In terms of assembly, homodimer.

The catalysed reaction is uridine(38/39/40) in tRNA = pseudouridine(38/39/40) in tRNA. In terms of biological role, formation of pseudouridine at positions 38, 39 and 40 in the anticodon stem and loop of transfer RNAs. The protein is tRNA pseudouridine synthase A of Pelodictyon phaeoclathratiforme (strain DSM 5477 / BU-1).